Reading from the N-terminus, the 84-residue chain is MKPGIHPSYGPVVFRDKAADFAFLTRSTMTSDRTVAWEDGNTYPVVDVEISSASHPFYTGTARVLDTAGRVERFERRYGRGGAR.

It belongs to the bacterial ribosomal protein bL31 family. Type B subfamily. As to quaternary structure, part of the 50S ribosomal subunit.

The polypeptide is Large ribosomal subunit protein bL31B (Streptomyces griseus subsp. griseus (strain JCM 4626 / CBS 651.72 / NBRC 13350 / KCC S-0626 / ISP 5235)).